The sequence spans 365 residues: MAGKKIAGVLGATGSVGQRFILLLANHPHFELKVLGASSRSAGKKYVDAVNWKQTDLLPESATDIIVSECKSEFFKECDIVFSGLDADYAGAIEKEFMEAGIAIVSNAKNYRREQDVPLIVPVVNPEHLDIVAQKLDTAKAQGKPRPGFIICISNCSTAGLVAPLKPLIEKFGPIDALTTTTLQAISGAGFSPGVPGIDILDNIIPYIGGEEDKMEWETKKILAPLAEDKTHVKLLTPEEIKVSAQCNRVAVSDGHTECISLRFKNRPAPSVEQVKTCLKEYVCDAYKLGCHSAPKQTIHVLEQPDRPQPRLDRNRDSGYGVSVGRIREDPLLDFKMVVLSHNTIIGAAGSGVLIAEILLARNLI.

Residues threonine 13, glycine 14, serine 15, valine 16, serine 38, serine 41, leucine 85, and aspartate 86 each contribute to the NADP(+) site. Position 13 is a phosphothreonine (threonine 13). Cysteine 156 (acyl-thioester intermediate) is an active-site residue. Glycine 188 is an NADP(+) binding site. Histidine 256 acts as the Proton acceptor in catalysis. Phosphoserine occurs at positions 318 and 323. Asparagine 343 is a binding site for NADP(+).

This sequence belongs to the aspartate-semialdehyde dehydrogenase family. Homotetramer.

Its subcellular location is the cytoplasm. It localises to the cytosol. The protein resides in the nucleus. The catalysed reaction is L-aspartate 4-semialdehyde + phosphate + NADP(+) = 4-phospho-L-aspartate + NADPH + H(+). The protein operates within amino-acid biosynthesis; L-methionine biosynthesis via de novo pathway; L-homoserine from L-aspartate: step 2/3. It participates in amino-acid biosynthesis; L-threonine biosynthesis; L-threonine from L-aspartate: step 2/5. Catalyzes the NADPH-dependent formation of L-aspartate 4-semialdehyde (L-ASA) by the reductive dephosphorylation of 4-phospho-L-aspartate. Mediates the second step in the biosynthesis of amino acids that derive from aspartate (the aspartate family of amino acids), including methioinine and threonine, the latter of which is a precursor to isoleucine. In Saccharomyces cerevisiae (strain ATCC 204508 / S288c) (Baker's yeast), this protein is Aspartate-semialdehyde dehydrogenase (HOM2).